Consider the following 470-residue polypeptide: Acetyl-CoA decarbonylase/synthase complex subunit gamma (470 aa).

The region spanning 1–62 (MKVKSPLEVY…DPKVKKKLEE (62 aa)) is the 4Fe-4S domain. The [4Fe-4S] cluster site is built by Cys-18, Cys-21, Cys-26, and Cys-43.

In terms of assembly, heterodimer of delta and gamma chains. The ACDS complex is made up of alpha, epsilon, beta, gamma and delta chains with a probable stoichiometry of (alpha(2)epsilon(2))(4)-beta(8)-(gamma(1)delta(1))(8). Corrinoid serves as cofactor. Requires [4Fe-4S] cluster as cofactor.

It catalyses the reaction 5,6,7,8-tetrahydrosarcinapterin + methyl-Co(III)-[corrinoid Fe-S protein] = 5-methyltetrahydrosarcinapterin + Co(I)-[corrinoid Fe-S protein] + H(+). Part of a complex that catalyzes the reversible cleavage of acetyl-CoA, allowing autotrophic growth from CO(2). The sequence is that of Acetyl-CoA decarbonylase/synthase complex subunit gamma from Archaeoglobus fulgidus (strain ATCC 49558 / DSM 4304 / JCM 9628 / NBRC 100126 / VC-16).